A 1220-amino-acid polypeptide reads, in one-letter code: Osmosensing histidine protein kinase SLN1 (1220 aa).

The Cytoplasmic portion of the chain corresponds to 1 to 22 (MRFGLPSKLELTPPFRIGIRTQ). A helical membrane pass occupies residues 23 to 46 (LTALVSIVALGSLIILAVTTGVYF). Residues 47–333 (TSNYKNLRSD…FLSPATKLAK (287 aa)) are Extracellular-facing. N-linked (GlcNAc...) asparagine glycans are attached at residues N100, N138, N142, N181, N224, and N272. The chain crosses the membrane as a helical span at residues 334-354 (IITGTVIAIGVFVILLTLPLA). Topologically, residues 355-1220 (HWAVQPIVRL…AAYQGKKNNK (866 aa)) are cytoplasmic. 2 disordered regions span residues 414-433 (GSTTSVSGHGGSGHGSGAAF) and 444-500 (NLGN…HILT). Residues 451-468 (SPPEEENKIPNNHTDAKI) show a composition bias toward basic and acidic residues. Phosphoserine is present on S502. Residues 573–928 (NISHELRTPL…KFTFTLPLNQ (356 aa)) form the Histidine kinase domain. A Phosphohistidine; by autocatalysis modification is found at H576. A phosphoserine mark is found at S758 and S833. 2 disordered regions span residues 960–1016 (AKSI…DNGG) and 1040–1081 (NSLS…VKDD). Residues 965 to 984 (SRQSTSSVATPATNRSSLTN) are compositionally biased toward polar residues. Over residues 988-1000 (PEVRSKGKHETKD) the composition is skewed to basic and acidic residues. S1041 and S1044 each carry phosphoserine. Residues 1063–1075 (LQSTGTATSSRNI) are compositionally biased toward polar residues. The Response regulatory domain maps to 1089–1210 (KILVVEDNHV…KLKTILTEFC (122 aa)). E1094, D1095, D1144, and K1195 together coordinate Mg(2+). D1144 carries the post-translational modification 4-aspartylphosphate.

As to quaternary structure, interacts with DJP1, MOG1 and YPD1. The phosphorelay mechanism involves the sequential transfer of a phosphate group from His-576 (H1) in the histidine kinase domain (transmitter domain) to Asp-1144 (D1) of the response regulatory domain (receiver domain). This transfer probably occurs between two SLN1 molecules, rather than intramolecularly. The phosphate group is further transferred to 'His-64' (H2) of YPD1 and finally to 'Asp-554' (D2) of SSK1 or 'Asp-427' (D2) of SKN7.

Its subcellular location is the cell membrane. It carries out the reaction ATP + protein L-histidine = ADP + protein N-phospho-L-histidine.. In terms of biological role, histidine kinase that acts as an osmosensor at the plasma membrane. Part of the bifurcated SLN1-YPD1-SKN7/SSK1 two-component regulatory system, which controls activity of the HOG1 pathway and gene expression in response to changes in the osmolarity of the extracellular environment. Under normal osmotic conditions, the histidine kinase autophosphorylates His-576. This phosphate is subsequently transferred to Asp-1144, from where it is relayed to 'His-64' of the phosphorelay intermediate protein YPD1. Under high osmolarity conditions, the histidine kinase is no longer active. The protein is Osmosensing histidine protein kinase SLN1 (SLN1) of Saccharomyces cerevisiae (strain ATCC 204508 / S288c) (Baker's yeast).